A 258-amino-acid polypeptide reads, in one-letter code: Cytochrome c oxidase subunit 2 (258 aa).

Topologically, residues 1–41 (MIVNECLFFTIALCDAAEPWQLGFQDAATPMMQGIIDLHHD) are mitochondrial intermembrane. A helical membrane pass occupies residues 42–58 (ILFFLILILVFVLWILV). The Mitochondrial matrix segment spans residues 59 to 82 (RALWHFYYKKNPIPQRIVHGTTIE). The helical transmembrane segment at 83–104 (ILWTIFPSIILMFIAIPSFALL) threads the bilayer. The Mitochondrial intermembrane segment spans residues 105–258 (YSMDEVVVDP…VSNLFIPPTS (154 aa)). Residues His-187, Cys-222, Glu-224, Cys-226, His-230, and Met-233 each contribute to the Cu cation site. Glu-224 contacts Mg(2+).

This sequence belongs to the cytochrome c oxidase subunit 2 family. Component of the cytochrome c oxidase (complex IV, CIV), a multisubunit enzyme composed of a catalytic core of 3 subunits and several supernumerary subunits. The complex exists as a monomer or a dimer and forms supercomplexes (SCs) in the inner mitochondrial membrane with ubiquinol-cytochrome c oxidoreductase (cytochrome b-c1 complex, complex III, CIII). Requires Cu cation as cofactor.

The protein localises to the mitochondrion inner membrane. The enzyme catalyses 4 Fe(II)-[cytochrome c] + O2 + 8 H(+)(in) = 4 Fe(III)-[cytochrome c] + 2 H2O + 4 H(+)(out). Component of the cytochrome c oxidase, the last enzyme in the mitochondrial electron transport chain which drives oxidative phosphorylation. The respiratory chain contains 3 multisubunit complexes succinate dehydrogenase (complex II, CII), ubiquinol-cytochrome c oxidoreductase (cytochrome b-c1 complex, complex III, CIII) and cytochrome c oxidase (complex IV, CIV), that cooperate to transfer electrons derived from NADH and succinate to molecular oxygen, creating an electrochemical gradient over the inner membrane that drives transmembrane transport and the ATP synthase. Cytochrome c oxidase is the component of the respiratory chain that catalyzes the reduction of oxygen to water. Electrons originating from reduced cytochrome c in the intermembrane space (IMS) are transferred via the dinuclear copper A center (CU(A)) of subunit 2 and heme A of subunit 1 to the active site in subunit 1, a binuclear center (BNC) formed by heme A3 and copper B (CU(B)). The BNC reduces molecular oxygen to 2 water molecules using 4 electrons from cytochrome c in the IMS and 4 protons from the mitochondrial matrix. The sequence is that of Cytochrome c oxidase subunit 2 (COX2) from Oenothera berteroana (Bertero's evening primrose).